We begin with the raw amino-acid sequence, 494 residues long: Amidophosphoribosyltransferase (494 aa).

The propeptide occupies 1–10 (MFNYSGLNEE). Cys-11 functions as the Nucleophile in the catalytic mechanism. The region spanning 11–231 (CGVFGIWNHP…AGEYVVINDK (221 aa)) is the Glutamine amidotransferase type-2 domain. Ser-294, Asp-356, and Asp-357 together coordinate Mg(2+).

The protein in the C-terminal section; belongs to the purine/pyrimidine phosphoribosyltransferase family. Requires Mg(2+) as cofactor.

The enzyme catalyses 5-phospho-beta-D-ribosylamine + L-glutamate + diphosphate = 5-phospho-alpha-D-ribose 1-diphosphate + L-glutamine + H2O. It participates in purine metabolism; IMP biosynthesis via de novo pathway; N(1)-(5-phospho-D-ribosyl)glycinamide from 5-phospho-alpha-D-ribose 1-diphosphate: step 1/2. Catalyzes the formation of phosphoribosylamine from phosphoribosylpyrophosphate (PRPP) and glutamine. The chain is Amidophosphoribosyltransferase from Staphylococcus aureus (strain Mu50 / ATCC 700699).